A 488-amino-acid chain; its full sequence is Dipeptide and tripeptide permease B (488 aa).

The Cytoplasmic segment spans residues Met-1–Arg-27. The helical transmembrane segment at Phe-28 to Ser-48 threads the bilayer. Over Glu-49–Ser-52 the chain is Periplasmic. A helical membrane pass occupies residues Phe-53 to Val-73. Topologically, residues Gly-74–Arg-82 are cytoplasmic. The helical transmembrane segment at Thr-83–Met-103 threads the bilayer. Topologically, residues Lys-104–Glu-106 are periplasmic. Residues Leu-107–Ala-127 traverse the membrane as a helical segment. Topologically, residues Ser-128–Thr-146 are cytoplasmic. The helical transmembrane segment at Leu-147–Ala-167 threads the bilayer. Over Glu-168 to Tyr-172 the chain is Periplasmic. The helical transmembrane segment at Thr-173–Cys-193 threads the bilayer. At Arg-194–Pro-211 the chain is on the cytoplasmic side. A helical membrane pass occupies residues Ile-212–Leu-232. Residues His-233–Asn-234 are Periplasmic-facing. Residues Ile-235–Trp-255 form a helical membrane-spanning segment. Residues Gln-256–Lys-267 are Cytoplasmic-facing. A helical membrane pass occupies residues Met-268 to Met-288. Residues Pro-289–Pro-311 are Periplasmic-facing. Residues Val-312–Val-332 traverse the membrane as a helical segment. At Tyr-333–Lys-348 the chain is on the cytoplasmic side. A helical transmembrane segment spans residues Phe-349–Phe-369. Topologically, residues Ala-370–Pro-378 are periplasmic. Residues Trp-379–Gly-399 traverse the membrane as a helical segment. The Cytoplasmic segment spans residues Leu-400–Gln-423. Residues Ala-424–Thr-444 traverse the membrane as a helical segment. Residues Asp-445 to Ser-455 lie on the Periplasmic side of the membrane. A helical membrane pass occupies residues Val-456–Pro-476. Topologically, residues Trp-477–Ala-488 are cytoplasmic.

The protein belongs to the major facilitator superfamily. Proton-dependent oligopeptide transporter (POT/PTR) (TC 2.A.17) family. DtpB subfamily.

The protein resides in the cell inner membrane. Proton-dependent permease that transports di- and tripeptides. This chain is Dipeptide and tripeptide permease B, found in Xenorhabdus bovienii (strain SS-2004) (Xenorhabdus nematophila subsp. bovienii).